We begin with the raw amino-acid sequence, 449 residues long: Heterogeneous nuclear ribonucleoprotein H2 (449 aa).

Methionine 1 carries the post-translational modification N-acetylmethionine. Methionine 2 bears the N-acetylmethionine; in Heterogeneous nuclear ribonucleoprotein H2, N-terminally processed mark. The RRM 1 domain maps to 11–90; sequence FVVKVRGLPW…RYVEVFKSNS (80 aa). Phosphoserine is present on serine 23. Lysine 35 is covalently cross-linked (Glycyl lysine isopeptide (Lys-Gly) (interchain with G-Cter in SUMO2)). Phosphoserine is present on residues serine 54 and serine 63. Lysine 87 participates in a covalent cross-link: Glycyl lysine isopeptide (Lys-Gly) (interchain with G-Cter in SUMO2). At serine 90 the chain carries Phosphoserine. Residue lysine 98 forms a Glycyl lysine isopeptide (Lys-Gly) (interchain with G-Cter in SUMO2) linkage. The region spanning 111–188 is the RRM 2 domain; sequence GFVRLRGLPF…RYIEIFKSSR (78 aa). Residue arginine 233 is modified to Dimethylated arginine; alternate. Arginine 233 carries the omega-N-methylarginine; alternate modification. A 1-1 repeat occupies 234–249; the sequence is GAYGGGYGGYDDYGGY. The segment at 234 to 433 is 2 X 16 AA Gly-rich approximate repeats; it reads GAYGGGYGGY…YGGQSSMSGY (200 aa). At tyrosine 246 the chain carries Phosphotyrosine. The RRM 3 domain maps to 289-364; sequence HCVHMRGLPY…RYVELFLNST (76 aa). At serine 310 the chain carries Phosphoserine. 3 repeat units span residues 354–372, 374–392, and 418–433. The segment at 354 to 392 is 2 X 19 AA perfect repeats; sequence HRYVELFLNSTAGTSGGAYDHSYVELFLNSTAGASGGAY.

Component of a ribonucleoprotein complex containing mRNAs and RNA-binding proteins including DDX5, HNRNPH2 and SRSF1 as well as splicing regulator ARVCF. Interacts with TXNL4/DIM1. In terms of tissue distribution, expressed ubiquitously.

Its subcellular location is the nucleus. The protein localises to the nucleoplasm. Its function is as follows. This protein is a component of the heterogeneous nuclear ribonucleoprotein (hnRNP) complexes which provide the substrate for the processing events that pre-mRNAs undergo before becoming functional, translatable mRNAs in the cytoplasm. Binds poly(RG). The chain is Heterogeneous nuclear ribonucleoprotein H2 (HNRNPH2) from Homo sapiens (Human).